The primary structure comprises 374 residues: PqqA peptide cyclase (374 aa).

The 218-residue stretch at Val13–Leu230 folds into the Radical SAM core domain. Cys27, Cys31, and Cys34 together coordinate [4Fe-4S] cluster.

The protein belongs to the radical SAM superfamily. PqqE family. In terms of assembly, interacts with PqqD. The interaction is necessary for activity of PqqE. [4Fe-4S] cluster serves as cofactor.

It carries out the reaction [PQQ precursor protein] + S-adenosyl-L-methionine = E-Y cross-linked-[PQQ precursor protein] + 5'-deoxyadenosine + L-methionine + H(+). It participates in cofactor biosynthesis; pyrroloquinoline quinone biosynthesis. Its function is as follows. Catalyzes the cross-linking of a glutamate residue and a tyrosine residue in the PqqA protein as part of the biosynthesis of pyrroloquinoline quinone (PQQ). This Ruegeria pomeroyi (strain ATCC 700808 / DSM 15171 / DSS-3) (Silicibacter pomeroyi) protein is PqqA peptide cyclase.